Here is a 727-residue protein sequence, read N- to C-terminus: MTVSENSVLETEVLVGGSAMPNERPGAMEPQSLSQMPEGFPRRSTVANGVRSKVSRRFFVVGGALALSAFAIYEMGAVFSIGGITPLEYLMLALFAINFCWIALAFCSGIAGFFMLLKKPKPNELEQTELHTRTAILMPTYNESPDRVFSAVSVMAEALSQTGHGHAFDWFILSDTTDPEIALLEEQAFLVLRQETHKHSRVYYRRRRKNVARKAGNVADFCRRWGSRYDHLLVLDADSLMESSTITGLAQRMQADPDAGLIQTIPSLINGTTLMARLQQFAARIYGPVIGTGLGWWVQKEGNFWGHNAIIRTEAFMGAAGLPNLKGKPPFGGHILSHDFVEAALIRRAGWSVVIAYDLPGSYEECPPSIVDLAVRDRRWCQGNLQHSRILPTKGLHWVSRLHLMTGIMAYLSSPFWLLLILTGLMLALQAHFIRPEYFTDQFSLFPTWPIMDSDRALRLFYITMGVLFGPKIFGVLLLLKDGNFARSVGGRIKAILSVIFEVILSALIAPIMMFIHCGAVMSILMGRDSGWSPQRRDDGSMPWLTLIYRHRWHMLAGVMLGYAAILDSLTLLAWMSPALIGLWLAVPISAWTGSIKIGEFFKRIGILATPEERNPAPICIRAQEARAAYQAHIEQPWTLAQVLKDPALMELHLAMVDKQPLRAAGTPIEPVEAIVHVKVHEAQCQQSALALFNRQEMALVLANPLMLRSLQKLPEQFVPEDLVSFC.

The interval 18–43 (SAMPNERPGAMEPQSLSQMPEGFPRR) is disordered. Transmembrane regions (helical) follow at residues 58 to 78 (FFVV…MGAV), 94 to 114 (LFAI…AGFF), 278 to 298 (LQQF…GWWV), 408 to 428 (IMAY…LMLA), 460 to 480 (LFYI…LLLL), 496 to 516 (ILSV…MMFI), and 572 to 592 (LLAW…ISAW).

Belongs to the glycosyltransferase 2 family. OpgH subfamily.

It is found in the cell inner membrane. The protein operates within glycan metabolism; osmoregulated periplasmic glucan (OPG) biosynthesis. Its function is as follows. Involved in the biosynthesis of osmoregulated periplasmic glucans (OPGs). This is Glucans biosynthesis glucosyltransferase H from Shewanella sp. (strain ANA-3).